The sequence spans 414 residues: Histidine--tRNA ligase (414 aa).

The protein belongs to the class-II aminoacyl-tRNA synthetase family. In terms of assembly, homodimer.

The protein resides in the cytoplasm. The catalysed reaction is tRNA(His) + L-histidine + ATP = L-histidyl-tRNA(His) + AMP + diphosphate + H(+). This chain is Histidine--tRNA ligase, found in Ehrlichia ruminantium (strain Welgevonden).